Reading from the N-terminus, the 214-residue chain is ATP-dependent Clp protease proteolytic subunit (214 aa).

Serine 114 functions as the Nucleophile in the catalytic mechanism. Histidine 139 is a catalytic residue.

This sequence belongs to the peptidase S14 family. In terms of assembly, fourteen ClpP subunits assemble into 2 heptameric rings which stack back to back to give a disk-like structure with a central cavity, resembling the structure of eukaryotic proteasomes.

The protein resides in the cytoplasm. The enzyme catalyses Hydrolysis of proteins to small peptides in the presence of ATP and magnesium. alpha-casein is the usual test substrate. In the absence of ATP, only oligopeptides shorter than five residues are hydrolyzed (such as succinyl-Leu-Tyr-|-NHMec, and Leu-Tyr-Leu-|-Tyr-Trp, in which cleavage of the -Tyr-|-Leu- and -Tyr-|-Trp bonds also occurs).. In terms of biological role, cleaves peptides in various proteins in a process that requires ATP hydrolysis. Has a chymotrypsin-like activity. Plays a major role in the degradation of misfolded proteins. This chain is ATP-dependent Clp protease proteolytic subunit, found in Nitrosomonas eutropha (strain DSM 101675 / C91 / Nm57).